Here is a 197-residue protein sequence, read N- to C-terminus: Gastrula zinc finger protein XlCGF17.1 (197 aa).

7 C2H2-type zinc fingers span residues 6-28 (ISCS…QMTH), 34-56 (YSCS…QKIH), 62-84 (FSCS…HRTH), 90-112 (FFCS…RRTH), 118-140 (FSCS…YRTH), 146-169 (FSCS…RRSH), and 175-197 (FSCS…LRTH).

The protein belongs to the krueppel C2H2-type zinc-finger protein family.

The protein resides in the nucleus. Functionally, may be involved in transcriptional regulation. The protein is Gastrula zinc finger protein XlCGF17.1 of Xenopus laevis (African clawed frog).